Consider the following 347-residue polypeptide: MQIQLGANLKPYHTFGIEQLAAQLVVAESIDDLKALYCSAEWASLPKLIIGKGSNMLFTCHYTGMIVVNRLNGIEHQQDDDYHRLHVAGGEDWPSLVSWCVEQGIGGLENLALIPGCAGSAPIQNIGAYGVEFKDVCDYVEYLCLETGTVKRLTMEECQFGYRDSIFKHQLYQKAVVTAVGLKFAKAWQPIIQYGPLKDLSSDCAIHDVYQRVCATRMEKLPDPAVMGNAGSFFKNPVISQQAFARLQIEHPDVVAYPAEQGVKVAAGWLIDQAGLKGHQIGGAKVHPKQALVIVNTGDASAQDVLMLAADIQQRVFNCYGIELEHEVRFIGESEETNLKQWMSEQA.

The FAD-binding PCMH-type domain maps to 17 to 187; sequence IEQLAAQLVV…TAVGLKFAKA (171 aa). Arginine 163 is a catalytic residue. Residue serine 232 is the Proton donor of the active site. Residue glutamate 327 is part of the active site.

Belongs to the MurB family. It depends on FAD as a cofactor.

It localises to the cytoplasm. The enzyme catalyses UDP-N-acetyl-alpha-D-muramate + NADP(+) = UDP-N-acetyl-3-O-(1-carboxyvinyl)-alpha-D-glucosamine + NADPH + H(+). The protein operates within cell wall biogenesis; peptidoglycan biosynthesis. In terms of biological role, cell wall formation. In Vibrio cholerae serotype O1 (strain ATCC 39315 / El Tor Inaba N16961), this protein is UDP-N-acetylenolpyruvoylglucosamine reductase.